An 89-amino-acid polypeptide reads, in one-letter code: Small ribosomal subunit protein uS14 (89 aa).

This sequence belongs to the universal ribosomal protein uS14 family. As to quaternary structure, part of the 30S ribosomal subunit. Contacts proteins S3 and S10.

Functionally, binds 16S rRNA, required for the assembly of 30S particles and may also be responsible for determining the conformation of the 16S rRNA at the A site. The protein is Small ribosomal subunit protein uS14 of Chlorobium phaeovibrioides (strain DSM 265 / 1930) (Prosthecochloris vibrioformis (strain DSM 265)).